Consider the following 90-residue polypeptide: Phosphocarrier protein HPr (90 aa).

The region spanning 1 to 89 is the HPr domain; it reads MPALEITIIN…ELINNRFDEG (89 aa). H15 serves as the catalytic Pros-phosphohistidine intermediate.

This sequence belongs to the HPr family.

It localises to the cytoplasm. In terms of biological role, general (non sugar-specific) component of the phosphoenolpyruvate-dependent sugar phosphotransferase system (sugar PTS). This major carbohydrate active-transport system catalyzes the phosphorylation of incoming sugar substrates concomitantly with their translocation across the cell membrane. The phosphoryl group from phosphoenolpyruvate (PEP) is transferred to the phosphoryl carrier protein HPr by enzyme I. Phospho-HPr then transfers it to the PTS EIIA domain. The protein is Phosphocarrier protein HPr (ptsH) of Pseudomonas aeruginosa (strain ATCC 15692 / DSM 22644 / CIP 104116 / JCM 14847 / LMG 12228 / 1C / PRS 101 / PAO1).